The sequence spans 22 residues: 2.39 kDa venom peptide (22 aa).

Contains 2 disulfide bonds. In terms of tissue distribution, expressed by the venom gland.

The protein resides in the secreted. In terms of biological role, not lethal to mice by intraperitoneal or intracerebroventricular injections in doses up to 100 micrograms. This Heterometrus spinifer (Asia giant forest scorpion) protein is 2.39 kDa venom peptide.